We begin with the raw amino-acid sequence, 359 residues long: Glycerol-1-phosphate dehydrogenase [NAD(P)+] (359 aa).

NAD(+) contacts are provided by residues 107-111 and 129-132; these read GRVID and TAAS. Position 134 (aspartate 134) interacts with substrate. Serine 138 contributes to the NAD(+) binding site. Aspartate 181 serves as a coordination point for substrate. Zn(2+)-binding residues include aspartate 181 and histidine 261. Histidine 265 provides a ligand contact to substrate. Position 277 (histidine 277) interacts with Zn(2+).

It belongs to the glycerol-1-phosphate dehydrogenase family. It depends on Zn(2+) as a cofactor.

It localises to the cytoplasm. It catalyses the reaction sn-glycerol 1-phosphate + NAD(+) = dihydroxyacetone phosphate + NADH + H(+). It carries out the reaction sn-glycerol 1-phosphate + NADP(+) = dihydroxyacetone phosphate + NADPH + H(+). It participates in membrane lipid metabolism; glycerophospholipid metabolism. Functionally, catalyzes the NAD(P)H-dependent reduction of dihydroxyacetonephosphate (DHAP or glycerone phosphate) to glycerol 1-phosphate (G1P). The G1P thus generated is used as the glycerophosphate backbone of phospholipids in the cellular membranes of Archaea. The sequence is that of Glycerol-1-phosphate dehydrogenase [NAD(P)+] from Methanoregula boonei (strain DSM 21154 / JCM 14090 / 6A8).